The primary structure comprises 247 residues: Dihydroorotate dehydrogenase B (NAD(+)), electron transfer subunit (247 aa).

The FAD-binding FR-type domain occupies 2–96 (RWKMKARVLS…TGPHGNGFEI (95 aa)). Residues 49–52 (RPFS), 64–66 (LYQ), and 71–72 (GT) each bind FAD. [2Fe-2S] cluster contacts are provided by cysteine 210, cysteine 215, cysteine 218, and cysteine 234.

The protein belongs to the PyrK family. Heterotetramer of 2 PyrK and 2 PyrD type B subunits. The cofactor is [2Fe-2S] cluster. FAD serves as cofactor.

Its pathway is pyrimidine metabolism; UMP biosynthesis via de novo pathway; orotate from (S)-dihydroorotate (NAD(+) route): step 1/1. Responsible for channeling the electrons from the oxidation of dihydroorotate from the FMN redox center in the PyrD type B subunit to the ultimate electron acceptor NAD(+). The protein is Dihydroorotate dehydrogenase B (NAD(+)), electron transfer subunit of Caldanaerobacter subterraneus subsp. tengcongensis (strain DSM 15242 / JCM 11007 / NBRC 100824 / MB4) (Thermoanaerobacter tengcongensis).